The chain runs to 258 residues: 14-3-3 protein 6 (258 aa).

The tract at residues 238-258 is disordered; that stretch reads DMQDDGTDEIKEATPKPDDNE. Positions 245-258 are enriched in basic and acidic residues; it reads DEIKEATPKPDDNE.

The protein belongs to the 14-3-3 family. In terms of assembly, homodimer.

This is 14-3-3 protein 6 (TFT6) from Solanum lycopersicum (Tomato).